The following is a 538-amino-acid chain: CTP synthase (538 aa).

An amidoligase domain region spans residues 1–267 (MDRAKFIFVT…LTPIARRFNL (267 aa)). S15 lines the CTP pocket. S15 is a binding site for UTP. Residues 16–21 (SLGKGI) and D73 contribute to the ATP site. Mg(2+) is bound by residues D73 and E141. CTP is bound by residues 148–150 (DME), 188–193 (KTKPTQ), and K224. Residues 188 to 193 (KTKPTQ) and K224 contribute to the UTP site. Residues 292 to 538 (KIGFVGKYLS…DFIKSALSKS (247 aa)) enclose the Glutamine amidotransferase type-1 domain. G351 lines the L-glutamine pocket. The Nucleophile; for glutamine hydrolysis role is filled by C378. L-glutamine-binding positions include 379 to 382 (LGMQ), E402, and R469. Residues H513 and E515 contribute to the active site.

Belongs to the CTP synthase family. As to quaternary structure, homotetramer.

The enzyme catalyses UTP + L-glutamine + ATP + H2O = CTP + L-glutamate + ADP + phosphate + 2 H(+). It catalyses the reaction L-glutamine + H2O = L-glutamate + NH4(+). The catalysed reaction is UTP + NH4(+) + ATP = CTP + ADP + phosphate + 2 H(+). It functions in the pathway pyrimidine metabolism; CTP biosynthesis via de novo pathway; CTP from UDP: step 2/2. Allosterically activated by GTP, when glutamine is the substrate; GTP has no effect on the reaction when ammonia is the substrate. The allosteric effector GTP functions by stabilizing the protein conformation that binds the tetrahedral intermediate(s) formed during glutamine hydrolysis. Inhibited by the product CTP, via allosteric rather than competitive inhibition. Its function is as follows. Catalyzes the ATP-dependent amination of UTP to CTP with either L-glutamine or ammonia as the source of nitrogen. Regulates intracellular CTP levels through interactions with the four ribonucleotide triphosphates. This Helicobacter pylori (strain HPAG1) protein is CTP synthase.